The following is a 146-amino-acid chain: Hemoglobin subunit beta (146 aa).

V1 bears the N-acetylvaline mark. Residues 2-146 (HLTGEEKSAV…VANALAHKYH (145 aa)) enclose the Globin domain. T12 is subject to Phosphothreonine. S44 is modified (phosphoserine). K59 carries the post-translational modification N6-acetyllysine. H63 lines the heme b pocket. K82 carries the post-translational modification N6-acetyllysine. H92 is a binding site for heme b. The residue at position 93 (C93) is an S-nitrosocysteine. K144 is subject to N6-acetyllysine.

Belongs to the globin family. In terms of assembly, heterotetramer of two alpha chains and two beta chains. In terms of tissue distribution, red blood cells.

Involved in oxygen transport from the lung to the various peripheral tissues. The polypeptide is Hemoglobin subunit beta (HBB) (Loris tardigradus (Slender loris)).